We begin with the raw amino-acid sequence, 139 residues long: Small ribosomal subunit protein uS9 (139 aa).

This sequence belongs to the universal ribosomal protein uS9 family.

The chain is Small ribosomal subunit protein uS9 from Coxiella burnetii (strain CbuK_Q154) (Coxiella burnetii (strain Q154)).